We begin with the raw amino-acid sequence, 1131 residues long: cGMP-specific 3',5'-cyclic phosphodiesterase (1131 aa).

2 disordered regions span residues 1 to 26 and 42 to 150; these read MTDV…SAAT and GVAP…SQQD. A compositionally biased stretch (low complexity) spans 42–63; that stretch reads GVAPGAVPGPGSAAIPASSSSG. Over residues 75-86 the composition is skewed to polar residues; sequence SNNNRPAATNRS. A compositionally biased stretch (low complexity) spans 110–136; that stretch reads SSSTPSQSPSPSQSPSQASIQTQTSQQ. GAF domains follow at residues 255-412 and 444-625; these read DIDV…GIGI and NLEC…GLGI. Residues 655–978 enclose the PDEase domain; it reads SQDQTEKLTQ…RNWQDLAEKV (324 aa). The active-site Proton donor is His-731. Positions 735, 771, 772, and 882 each coordinate a divalent metal cation. Disordered stretches follow at residues 1019-1048 and 1078-1131; these read QQSQ…TGAL and SHVS…CALL. 2 stretches are compositionally biased toward basic and acidic residues: residues 1024 to 1035 and 1078 to 1088; these read GSEDSHTPEHQR and SHVSEDMDDKS. Low complexity predominate over residues 1097-1117; that stretch reads ASGSMGRMSASSSTSSAGGQM. Residues 1121–1131 are compositionally biased toward basic residues; sequence SKKRSKLCALL. Cys-1128 is subject to Cysteine methyl ester. Cys-1128 is lipidated: S-farnesyl cysteine. Positions 1129–1131 are cleaved as a propeptide — removed in mature form; that stretch reads ALL.

It belongs to the cyclic nucleotide phosphodiesterase family. As to quaternary structure, interacts with PrBP. The cofactor is a divalent metal cation.

The protein resides in the cell membrane. The catalysed reaction is 3',5'-cyclic GMP + H2O = GMP + H(+). In terms of biological role, has a role regulating cGMP transport in Malpighian tubule principal cells. The chain is cGMP-specific 3',5'-cyclic phosphodiesterase from Drosophila erecta (Fruit fly).